Reading from the N-terminus, the 119-residue chain is Large ribosomal subunit protein bL17 (119 aa).

Belongs to the bacterial ribosomal protein bL17 family. In terms of assembly, part of the 50S ribosomal subunit. Contacts protein L32.

In Mycoplasma mycoides subsp. mycoides SC (strain CCUG 32753 / NCTC 10114 / PG1), this protein is Large ribosomal subunit protein bL17.